A 476-amino-acid chain; its full sequence is RuvB-like 1 (476 aa).

A disordered region spans residues M1–V23. An ATP-binding site is contributed by G89–T96.

The protein belongs to the RuvB family. As to quaternary structure, forms homohexameric rings. May form a dodecamer with ruvb-2 made of two stacked hexameric rings. Expressed in gonadal cells.

The protein resides in the cytoplasm. The protein localises to the nucleus. The enzyme catalyses ATP + H2O = ADP + phosphate + H(+). In terms of biological role, possesses single-stranded DNA-stimulated ATPase and ATP dependent DNA helicase (3' to 5') activity suggesting a role in nuclear processes such as recombination and transcription. May participate in several chromatin remodeling complexes that mediate the ATP-dependent exchange of histones and remodel chromatin by shifting nucleosomes. Involvement in these complexes is likely required for transcriptional activation of selected genes and DNA repair in response to DNA damage. Involved in the Ce-Tor signaling pathway whereby it is required for the accumulation and localization of box C/D snoRNP to nucleoli to regulate ribosomal maturation and thus protein synthesis. Antagonizes the transcriptional activity of transcription factor pha-4, to control postembryonic development and adult longevity. Has a role in pharyngeal development. Has a role in gonadal development. This chain is RuvB-like 1, found in Caenorhabditis elegans.